The sequence spans 253 residues: Indole-3-glycerol phosphate synthase (253 aa).

This sequence belongs to the TrpC family.

It carries out the reaction 1-(2-carboxyphenylamino)-1-deoxy-D-ribulose 5-phosphate + H(+) = (1S,2R)-1-C-(indol-3-yl)glycerol 3-phosphate + CO2 + H2O. The protein operates within amino-acid biosynthesis; L-tryptophan biosynthesis; L-tryptophan from chorismate: step 4/5. The sequence is that of Indole-3-glycerol phosphate synthase from Bacillus cereus (strain B4264).